A 352-amino-acid polypeptide reads, in one-letter code: Protein Wnt-4a (352 aa).

The N-terminal stretch at methionine 1 to alanine 22 is a signal peptide. Disulfide bonds link cysteine 78–cysteine 89, cysteine 128–cysteine 136, cysteine 138–cysteine 155, cysteine 206–cysteine 220, cysteine 208–cysteine 215, cysteine 280–cysteine 312, cysteine 297–cysteine 307, cysteine 311–cysteine 351, cysteine 327–cysteine 342, cysteine 329–cysteine 339, and cysteine 334–cysteine 335. Residue asparagine 88 is glycosylated (N-linked (GlcNAc...) asparagine). Serine 212 carries the O-palmitoleoyl serine; by PORCN lipid modification. The N-linked (GlcNAc...) asparagine glycan is linked to asparagine 298.

It belongs to the Wnt family. Post-translationally, palmitoleoylation is required for efficient binding to frizzled receptors. Depalmitoleoylation leads to Wnt signaling pathway inhibition. Caudal forebrain and neural keel, the floor plate, the gill slit and the developing pronephros.

Its subcellular location is the secreted. It is found in the extracellular space. The protein resides in the extracellular matrix. Its function is as follows. Ligand for members of the frizzled family of seven transmembrane receptors. Plays an important role in embryonic development. The chain is Protein Wnt-4a (wnt4a) from Danio rerio (Zebrafish).